The primary structure comprises 149 residues: MSAKAKILLVNGPNLNLLGRREPGHYGHHTLDSIVQNMKNTANSADVELEHIQSNAEHELIDAIHSTDANFIIINPAAFTHTSVAIRDAILGVAIPFIEVHLSNVHAREPFRHHSYFSDKAVGVICGLGADGYQFALKSAINRLQGPSA.

Residue tyrosine 26 is the Proton acceptor of the active site. Residues asparagine 75, histidine 81, and aspartate 88 each coordinate substrate. Histidine 101 functions as the Proton donor in the catalytic mechanism. Substrate is bound by residues 102 to 103 (LS) and arginine 112.

This sequence belongs to the type-II 3-dehydroquinase family. Homododecamer.

The enzyme catalyses 3-dehydroquinate = 3-dehydroshikimate + H2O. Its pathway is metabolic intermediate biosynthesis; chorismate biosynthesis; chorismate from D-erythrose 4-phosphate and phosphoenolpyruvate: step 3/7. Catalyzes a trans-dehydration via an enolate intermediate. This Shewanella woodyi (strain ATCC 51908 / MS32) protein is 3-dehydroquinate dehydratase.